Consider the following 387-residue polypeptide: Phosphoglycerate kinase (387 aa).

Substrate-binding positions include 21–23 (DLN), Arg-36, 59–62 (HLGR), Arg-113, and Arg-146. ATP is bound by residues Lys-197, Glu-314, and 340-343 (GGDT).

This sequence belongs to the phosphoglycerate kinase family. In terms of assembly, monomer.

It localises to the cytoplasm. It carries out the reaction (2R)-3-phosphoglycerate + ATP = (2R)-3-phospho-glyceroyl phosphate + ADP. It functions in the pathway carbohydrate degradation; glycolysis; pyruvate from D-glyceraldehyde 3-phosphate: step 2/5. This chain is Phosphoglycerate kinase, found in Photorhabdus laumondii subsp. laumondii (strain DSM 15139 / CIP 105565 / TT01) (Photorhabdus luminescens subsp. laumondii).